A 327-amino-acid polypeptide reads, in one-letter code: Beta-ketoacyl-[acyl-carrier-protein] synthase III (327 aa).

Active-site residues include Cys-114 and His-254. The interval 255–259 (QANRR) is ACP-binding. Asn-284 is an active-site residue.

This sequence belongs to the thiolase-like superfamily. FabH family. In terms of assembly, homodimer.

The protein resides in the cytoplasm. It catalyses the reaction malonyl-[ACP] + acetyl-CoA + H(+) = 3-oxobutanoyl-[ACP] + CO2 + CoA. It functions in the pathway lipid metabolism; fatty acid biosynthesis. In terms of biological role, catalyzes the condensation reaction of fatty acid synthesis by the addition to an acyl acceptor of two carbons from malonyl-ACP. Catalyzes the first condensation reaction which initiates fatty acid synthesis and may therefore play a role in governing the total rate of fatty acid production. Possesses both acetoacetyl-ACP synthase and acetyl transacylase activities. Its substrate specificity determines the biosynthesis of branched-chain and/or straight-chain of fatty acids. This is Beta-ketoacyl-[acyl-carrier-protein] synthase III from Lactobacillus helveticus (strain DPC 4571).